The following is a 948-amino-acid chain: Receptor-like protein 45 (948 aa).

The signal sequence occupies residues M1 to S26. At C27–D897 the chain is on the extracellular side. Residues N99 and N113 are each glycosylated (N-linked (GlcNAc...) asparagine). LRR repeat units follow at residues F106–G129 and L135–L162. One copy of the LRR 3; degenerate repeat lies at K163–N183. The N-linked (GlcNAc...) asparagine glycan is linked to N183. 25 LRR repeats span residues L184–N208, R210–R233, L234–R257, F258–S284, E286–E306, L307–G332, Q334–Q357, Q358–N381, N382–M404, R405–L429, A430–M453, E454–G477, Y479–E502, T503–L526, R527–N549, F550–I573, Y575–S595, S596–W618, Y619–S640, P642–L665, S666–L689, L758–L782, K783–N805, R807–Q831, and L833–T855. An N-linked (GlcNAc...) asparagine glycan is attached at N328. Residues N381 and N392 are each glycosylated (N-linked (GlcNAc...) asparagine). 2 N-linked (GlcNAc...) asparagine glycosylation sites follow: N436 and N465. N608 carries an N-linked (GlcNAc...) asparagine glycan. N653, N679, and N688 each carry an N-linked (GlcNAc...) asparagine glycan. An N-linked (GlcNAc...) asparagine glycan is attached at N789. N837 and N842 each carry an N-linked (GlcNAc...) asparagine glycan. The chain crosses the membrane as a helical span at residues I898 to V918. The Cytoplasmic segment spans residues F919–I948.

Belongs to the RLP family.

It is found in the cell membrane. The polypeptide is Receptor-like protein 45 (Arabidopsis thaliana (Mouse-ear cress)).